The sequence spans 102 residues: Small ribosomal subunit protein uS17 (102 aa).

The segment at 1–27 is disordered; sequence MEQTEEHTDTHTDEQDEAVDRNDRKER.

The protein belongs to the universal ribosomal protein uS17 family. As to quaternary structure, part of the 30S ribosomal subunit.

Its function is as follows. One of the primary rRNA binding proteins, it binds specifically to the 5'-end of 16S ribosomal RNA. In Salinibacter ruber (strain DSM 13855 / M31), this protein is Small ribosomal subunit protein uS17.